The primary structure comprises 147 residues: Orcokinin peptides (147 aa).

Positions 1 to 27 are cleaved as a signal peptide; the sequence is MPRHSVFALSILALSITATVWIPTVQA. Propeptides lie at residues 28–89 and 146–147; these read ETNL…ERFG and FG.

Belongs to the orcokinin family.

It is found in the secreted. Functionally, myotropic peptides. The sequence is that of Orcokinin peptides from Apis mellifera (Honeybee).